The primary structure comprises 212 residues: GTP cyclohydrolase 1 (212 aa).

3 residues coordinate Zn(2+): cysteine 103, histidine 106, and cysteine 174.

Belongs to the GTP cyclohydrolase I family. As to quaternary structure, toroid-shaped homodecamer, composed of two pentamers of five dimers.

The catalysed reaction is GTP + H2O = 7,8-dihydroneopterin 3'-triphosphate + formate + H(+). It participates in cofactor biosynthesis; 7,8-dihydroneopterin triphosphate biosynthesis; 7,8-dihydroneopterin triphosphate from GTP: step 1/1. This Caulobacter vibrioides (strain ATCC 19089 / CIP 103742 / CB 15) (Caulobacter crescentus) protein is GTP cyclohydrolase 1.